The following is a 127-amino-acid chain: Large-conductance mechanosensitive channel (127 aa).

Helical transmembrane passes span 9-29 (EFAM…GVAF), 32-52 (IVTA…LGGI), and 75-95 (VIDF…INLL).

This sequence belongs to the MscL family. As to quaternary structure, homopentamer.

It is found in the cell inner membrane. In terms of biological role, channel that opens in response to stretch forces in the membrane lipid bilayer. May participate in the regulation of osmotic pressure changes within the cell. The protein is Large-conductance mechanosensitive channel of Legionella pneumophila subsp. pneumophila (strain Philadelphia 1 / ATCC 33152 / DSM 7513).